The sequence spans 191 residues: Holliday junction branch migration complex subunit RuvA (191 aa).

The segment at Met-1–Leu-64 is domain I. The segment at Asn-65–Ile-142 is domain II. The interval Ile-143–Asp-146 is flexible linker. The tract at residues Asp-146–Gln-191 is domain III.

This sequence belongs to the RuvA family. As to quaternary structure, homotetramer. Forms an RuvA(8)-RuvB(12)-Holliday junction (HJ) complex. HJ DNA is sandwiched between 2 RuvA tetramers; dsDNA enters through RuvA and exits via RuvB. An RuvB hexamer assembles on each DNA strand where it exits the tetramer. Each RuvB hexamer is contacted by two RuvA subunits (via domain III) on 2 adjacent RuvB subunits; this complex drives branch migration. In the full resolvosome a probable DNA-RuvA(4)-RuvB(12)-RuvC(2) complex forms which resolves the HJ.

It is found in the cytoplasm. Functionally, the RuvA-RuvB-RuvC complex processes Holliday junction (HJ) DNA during genetic recombination and DNA repair, while the RuvA-RuvB complex plays an important role in the rescue of blocked DNA replication forks via replication fork reversal (RFR). RuvA specifically binds to HJ cruciform DNA, conferring on it an open structure. The RuvB hexamer acts as an ATP-dependent pump, pulling dsDNA into and through the RuvAB complex. HJ branch migration allows RuvC to scan DNA until it finds its consensus sequence, where it cleaves and resolves the cruciform DNA. The chain is Holliday junction branch migration complex subunit RuvA from Ehrlichia ruminantium (strain Welgevonden).